The chain runs to 315 residues: Eukaryotic translation initiation factor 2 subunit 1 (315 aa).

Residues 17–88 (EDVVMVNVRS…EKGYIDLSKR (72 aa)) enclose the S1 motif domain. S49 is subject to Phosphoserine; by HRI. Phosphoserine is present on S52. K141 carries the post-translational modification N6-acetyllysine. S158 carries the post-translational modification Phosphoserine. 2 positions are modified to phosphothreonine: T279 and T281. The segment at 293 to 315 (LERENAEVDGDDDAEEMEAKAED) is disordered. The span at 299-308 (EVDGDDDAEE) shows a compositional bias: acidic residues.

Belongs to the eIF-2-alpha family. As to quaternary structure, eukaryotic translation initiation factor 2 eIF2 is a heterotrimeric complex composed of an alpha (EIF2S1), a beta (EIF2S2) and a gamma (EIF2S3) chain. eIF2 is member of the 43S pre-initiation complex (43S PIC). eIF2 forms a complex with at least CELF1/CUGBP1, CALR, CALR3, EIF2S1, EIF2S2, HSP90B1 and HSPA5. Interaction with METAP2 protects EIF2S1 from inhibitory phosphorylation. Interacts with ABCF1. Associates with ribosomes. Interacts with DDX3X in an RNA-independent manner. Post-translationally, phosphorylation at Ser-49 and Ser-52 stabilizes the eIF-2/GDP/eIF2B complex and prevents GDP/GTP exchange reaction, thus impairing the recycling of eIF-2 between successive rounds of initiation and leading to global inhibition of translation, while concomitantly initiating the preferential translation of integrated stress response (ISR)-specific mRNAs. Substrate for at least 4 kinases: EIF2AK1/HRI, EIF2AK2/PKR, EIF2AK3/PERK and EIF2AK4/GCN2. Phosphorylation on Ser-52 by the EIF2AK4/GCN2 protein kinase occurs in response to amino acid starvation and UV irradiation. Phosphorylation at Ser-52 by the EIF2AK3/PERK protein kinase occurs in response to the unfolded protein response. Phosphorylation at Ser-52 by EIF2AK1/HRI in response to mitochondrial damage promotes relocalization to the mitochondrial surface.

It localises to the cytoplasm. The protein localises to the stress granule. Its subcellular location is the cytosol. It is found in the mitochondrion. Activity is regulated by phosphorylation at Ser-49 and Ser-52, which stabilizes the eIF2/GDP/eIF2B complex and prevents the eIF2B-mediated exchange of GDP for GTP, thereby preventing the formation of the 43S pre-initiation complex (43S PIC). This results in the global attenuation of 5' cap-dependent protein synthesis and concomitant translation of ISR-specific mRNAs that contain a short upstream open reading frame (uORF) in their 5' UTR, such as ATF4, ATF5, DDIT3/CHOP and PPP1R15A/GADD34. In terms of biological role, member of the eIF2 complex that functions in the early steps of protein synthesis by forming a ternary complex with GTP and initiator tRNA. This complex binds to a 40S ribosomal subunit, followed by mRNA binding to form a 43S pre-initiation complex. Junction of the 60S ribosomal subunit to form the 80S initiation complex is preceded by hydrolysis of the GTP bound to eIF2 and release of an eIF2-GDP binary complex. In order for eIF2 to recycle and catalyze another round of initiation, the GDP bound to eIF2 must exchange with GTP by way of a reaction catalyzed by eIF2B. EIF2S1/eIF2-alpha is a key component of the integrated stress response (ISR), required for adaptation to various stress: phosphorylation by metabolic-stress sensing protein kinases (EIF2AK1/HRI, EIF2AK2/PKR, EIF2AK3/PERK and EIF2AK4/GCN2) in response to stress converts EIF2S1/eIF2-alpha in a global protein synthesis inhibitor, leading to a attenuation of cap-dependent translation, while concomitantly initiating the preferential translation of ISR-specific mRNAs, such as the transcriptional activators ATF4 and QRICH1, and hence allowing ATF4- and QRICH1-mediated reprogramming. EIF2S1/eIF2-alpha also acts as an activator of mitophagy in response to mitochondrial damage: phosphorylation by EIF2AK1/HRI promotes relocalization to the mitochondrial surface, thereby triggering PRKN-independent mitophagy. The polypeptide is Eukaryotic translation initiation factor 2 subunit 1 (EIF2S1) (Pongo abelii (Sumatran orangutan)).